A 407-amino-acid polypeptide reads, in one-letter code: uncharacterized protein (407 aa).

The disordered stretch occupies residues 145–231; that stretch reads EANRFGRSNS…DPLTSITSDT (87 aa). A compositionally biased stretch (basic residues) spans 158–175; the sequence is SNSRSKSSRSRSNNRSKS. Over residues 176–196 the composition is skewed to low complexity; the sequence is SRSSSTQSKSNNRSNSRSNSK. The N-acetyltransferase domain occupies 271–407; sequence IVFETLDQND…NHKIHMEKDI (137 aa).

Its subcellular location is the virion. This is an uncharacterized protein from Acanthamoeba polyphaga (Amoeba).